The sequence spans 640 residues: Threonine--tRNA ligase (640 aa).

The TGS domain maps to 1-61; the sequence is MPVITLPDGS…SNDATLQIIT (61 aa). The tract at residues 242 to 533 is catalytic; the sequence is DHRKIGKQLD…LIEHYAGVFP (292 aa). Zn(2+) is bound by residues C333, H384, and H510.

This sequence belongs to the class-II aminoacyl-tRNA synthetase family. Homodimer. Zn(2+) serves as cofactor.

Its subcellular location is the cytoplasm. It catalyses the reaction tRNA(Thr) + L-threonine + ATP = L-threonyl-tRNA(Thr) + AMP + diphosphate + H(+). Its function is as follows. Catalyzes the attachment of threonine to tRNA(Thr) in a two-step reaction: L-threonine is first activated by ATP to form Thr-AMP and then transferred to the acceptor end of tRNA(Thr). Also edits incorrectly charged L-seryl-tRNA(Thr). In Pseudomonas putida (strain ATCC 47054 / DSM 6125 / CFBP 8728 / NCIMB 11950 / KT2440), this protein is Threonine--tRNA ligase.